Reading from the N-terminus, the 271-residue chain is Adenosylcobinamide-GDP ribazoletransferase (271 aa).

The next 7 helical transmembrane spans lie at 4–24 (FLLA…GMSM), 35–55 (YLQT…AYLT), 58–78 (FLPS…ITGL), 108–128 (SLGI…YASI), 135–155 (VLFF…IAEI), 192–212 (FVLG…IGYI), and 246–266 (IIVL…YGGL).

This sequence belongs to the CobS family. It depends on Mg(2+) as a cofactor.

The protein resides in the cell membrane. The catalysed reaction is alpha-ribazole + adenosylcob(III)inamide-GDP = adenosylcob(III)alamin + GMP + H(+). The enzyme catalyses alpha-ribazole 5'-phosphate + adenosylcob(III)inamide-GDP = adenosylcob(III)alamin 5'-phosphate + GMP + H(+). It participates in cofactor biosynthesis; adenosylcobalamin biosynthesis; adenosylcobalamin from cob(II)yrinate a,c-diamide: step 7/7. Functionally, joins adenosylcobinamide-GDP and alpha-ribazole to generate adenosylcobalamin (Ado-cobalamin). Also synthesizes adenosylcobalamin 5'-phosphate from adenosylcobinamide-GDP and alpha-ribazole 5'-phosphate. This chain is Adenosylcobinamide-GDP ribazoletransferase, found in Methanococcoides burtonii (strain DSM 6242 / NBRC 107633 / OCM 468 / ACE-M).